The chain runs to 273 residues: Putative phosphoenolpyruvate synthase regulatory protein (273 aa).

G153–T160 serves as a coordination point for ADP.

Belongs to the pyruvate, phosphate/water dikinase regulatory protein family. PSRP subfamily.

The catalysed reaction is [pyruvate, water dikinase] + ADP = [pyruvate, water dikinase]-phosphate + AMP + H(+). The enzyme catalyses [pyruvate, water dikinase]-phosphate + phosphate + H(+) = [pyruvate, water dikinase] + diphosphate. Its function is as follows. Bifunctional serine/threonine kinase and phosphorylase involved in the regulation of the phosphoenolpyruvate synthase (PEPS) by catalyzing its phosphorylation/dephosphorylation. This chain is Putative phosphoenolpyruvate synthase regulatory protein, found in Sodalis glossinidius (strain morsitans).